We begin with the raw amino-acid sequence, 122 residues long: Serum amyloid A-3 protein (122 aa).

The N-terminal stretch at 1–18 is a signal peptide; sequence MKPFLAIIFCFLILGVDS. Residues 100–122 form a disordered region; the sequence is ANKWGRSGKDPNHFRPAGLPSKY.

This sequence belongs to the SAA family. In terms of tissue distribution, expressed by the liver; secreted in plasma.

The protein localises to the secreted. Its function is as follows. Major acute phase reactant. Apolipoprotein of the HDL complex. In vitro exhibits antimicrobial activity against Escherichia coli, Streptococcus uberis and Pseudomonas aeruginosa. In Mesocricetus auratus (Golden hamster), this protein is Serum amyloid A-3 protein (SAA3).